The primary structure comprises 155 residues: Small ribosomal subunit protein uS7c (155 aa).

It belongs to the universal ribosomal protein uS7 family. Part of the 30S ribosomal subunit.

The protein resides in the plastid. Its subcellular location is the chloroplast. In terms of biological role, one of the primary rRNA binding proteins, it binds directly to 16S rRNA where it nucleates assembly of the head domain of the 30S subunit. This chain is Small ribosomal subunit protein uS7c (rps7), found in Coelogyne cristata (Orchid).